The sequence spans 347 residues: NADH-ubiquinone oxidoreductase chain 2 (347 aa).

A run of 11 helical transmembrane segments spans residues 1-21 (MNPI…MIVM), 25-45 (HWLM…PILM), 60-80 (FLTQ…NLMF), 89-109 (IFNP…LGLS), 111-131 (FHFW…LILL), 149-169 (INLD…GWGG), 178-198 (IMAY…TYNP), 201-221 (TALN…LFML), 242-262 (SLIL…GFIP), 274-294 (DSII…YFYM), and 323-343 (MNFL…TPIM).

Belongs to the complex I subunit 2 family. As to quaternary structure, core subunit of respiratory chain NADH dehydrogenase (Complex I) which is composed of 45 different subunits. Interacts with TMEM242.

Its subcellular location is the mitochondrion inner membrane. The catalysed reaction is a ubiquinone + NADH + 5 H(+)(in) = a ubiquinol + NAD(+) + 4 H(+)(out). Functionally, core subunit of the mitochondrial membrane respiratory chain NADH dehydrogenase (Complex I) which catalyzes electron transfer from NADH through the respiratory chain, using ubiquinone as an electron acceptor. Essential for the catalytic activity and assembly of complex I. The sequence is that of NADH-ubiquinone oxidoreductase chain 2 from Ceratotherium simum (White rhinoceros).